A 241-amino-acid chain; its full sequence is MKNNKIYINKKILLKLSGECLKKGKKNLVDFDILNKITNEIKNLFNLGIQIGIVIGGGNLFRGSQLKIHGIKRNIGDHIGMMSTLINGLFIYNHFERLNIKSQLISPFPFNINGICESYNIFRINKILKKKIVIFCFGIGHTLFTTDSAACLKAIEIDANLLLKITNVDGVFSEDPAKNPNATLYKKISYDYALKKNLKIMDFTAFAIAKEHKLPIRIFNIKEPNSLYKAIIGKDIGTLIN.

15–18 (KLSG) provides a ligand contact to ATP. Residue glycine 57 participates in UMP binding. Residues glycine 58 and arginine 62 each coordinate ATP. UMP-binding positions include aspartate 77 and 139-146 (IGHTLFTT). The ATP site is built by threonine 166, asparagine 167, phenylalanine 172, and aspartate 175.

The protein belongs to the UMP kinase family. Homohexamer.

It localises to the cytoplasm. The catalysed reaction is UMP + ATP = UDP + ADP. It functions in the pathway pyrimidine metabolism; CTP biosynthesis via de novo pathway; UDP from UMP (UMPK route): step 1/1. Inhibited by UTP. Its function is as follows. Catalyzes the reversible phosphorylation of UMP to UDP. The protein is Uridylate kinase of Wigglesworthia glossinidia brevipalpis.